The sequence spans 510 residues: 2,3-bisphosphoglycerate-independent phosphoglycerate mutase (510 aa).

Positions 13 and 63 each coordinate Mn(2+). Serine 63 serves as the catalytic Phosphoserine intermediate. Residues histidine 124, 154–155, arginine 186, arginine 192, 262–265, and lysine 334 contribute to the substrate site; these read RD and RADR. Positions 401, 405, 442, 443, and 461 each coordinate Mn(2+).

Belongs to the BPG-independent phosphoglycerate mutase family. Monomer. Mn(2+) serves as cofactor.

The enzyme catalyses (2R)-2-phosphoglycerate = (2R)-3-phosphoglycerate. The protein operates within carbohydrate degradation; glycolysis; pyruvate from D-glyceraldehyde 3-phosphate: step 3/5. Functionally, catalyzes the interconversion of 2-phosphoglycerate and 3-phosphoglycerate. The sequence is that of 2,3-bisphosphoglycerate-independent phosphoglycerate mutase from Vibrio vulnificus (strain YJ016).